A 477-amino-acid polypeptide reads, in one-letter code: Pentatricopeptide repeat-containing protein At1g55630 (477 aa).

PPR repeat units follow at residues 151–185, 186–220, 221–255, 256–290, 291–325, 326–360, 361–395, 396–430, and 431–465; these read TANC…GYPT, TACT…NYRP, YKHS…GFTP, DVLT…GFSP, DLYT…GVEP, GVIH…GCTP, DVVC…GQLP, NVFT…GCNP, and NFVV…GHYV.

This sequence belongs to the PPR family. P subfamily.

This chain is Pentatricopeptide repeat-containing protein At1g55630, found in Arabidopsis thaliana (Mouse-ear cress).